The following is a 337-amino-acid chain: Ornithine carbamoyltransferase (337 aa).

Residues 57–60, Gln-84, Arg-108, and 135–138 contribute to the carbamoyl phosphate site; these read STRT and HPTQ. L-ornithine contacts are provided by residues Asn-167, Asp-231, and 235–236; that span reads SM. Carbamoyl phosphate contacts are provided by residues 272-273 and Arg-317; that span reads CL.

Belongs to the aspartate/ornithine carbamoyltransferase superfamily. OTCase family.

Its subcellular location is the cytoplasm. It catalyses the reaction carbamoyl phosphate + L-ornithine = L-citrulline + phosphate + H(+). Its pathway is amino-acid degradation; L-arginine degradation via ADI pathway; carbamoyl phosphate from L-arginine: step 2/2. In terms of biological role, reversibly catalyzes the transfer of the carbamoyl group from carbamoyl phosphate (CP) to the N(epsilon) atom of ornithine (ORN) to produce L-citrulline. The chain is Ornithine carbamoyltransferase from Streptococcus uberis (strain ATCC BAA-854 / 0140J).